The primary structure comprises 121 residues: Large ribosomal subunit protein bL19 (121 aa).

This sequence belongs to the bacterial ribosomal protein bL19 family.

This protein is located at the 30S-50S ribosomal subunit interface and may play a role in the structure and function of the aminoacyl-tRNA binding site. This is Large ribosomal subunit protein bL19 from Symbiobacterium thermophilum (strain DSM 24528 / JCM 14929 / IAM 14863 / T).